A 269-amino-acid chain; its full sequence is Regulatory protein RecX (269 aa).

This sequence belongs to the RecX family.

It localises to the cytoplasm. In terms of biological role, modulates RecA activity. The chain is Regulatory protein RecX from Listeria monocytogenes serotype 4b (strain F2365).